We begin with the raw amino-acid sequence, 439 residues long: Adenylosuccinate synthetase (439 aa).

GTP-binding positions include 13–19 (GDEGKGK) and 41–43 (GHT). D14 (proton acceptor) is an active-site residue. Mg(2+)-binding residues include D14 and G41. IMP is bound by residues 14–17 (DEGK), 39–42 (NAGH), T130, R144, Q226, T241, and R313. Catalysis depends on H42, which acts as the Proton donor. Residue 309–315 (ASTGRQR) coordinates substrate. GTP is bound by residues R315, 341–343 (KLD), and 422–424 (STG).

It belongs to the adenylosuccinate synthetase family. As to quaternary structure, homodimer. Mg(2+) is required as a cofactor.

Its subcellular location is the cytoplasm. The catalysed reaction is IMP + L-aspartate + GTP = N(6)-(1,2-dicarboxyethyl)-AMP + GDP + phosphate + 2 H(+). It functions in the pathway purine metabolism; AMP biosynthesis via de novo pathway; AMP from IMP: step 1/2. Functionally, plays an important role in the de novo pathway of purine nucleotide biosynthesis. Catalyzes the first committed step in the biosynthesis of AMP from IMP. The sequence is that of Adenylosuccinate synthetase from Acinetobacter baylyi (strain ATCC 33305 / BD413 / ADP1).